The following is a 143-amino-acid chain: uncharacterized protein (143 aa).

The helical transmembrane segment at 4–24 (FGIVALSIICSIAFLFVAYGV) threads the bilayer. The tract at residues 97-143 (TVPFVNTEAPPPRLSSSFSRQSGENAETQSQVSASPFNDKNSPYVQE) is disordered. The segment covering 110 to 143 (LSSSFSRQSGENAETQSQVSASPFNDKNSPYVQE) has biased composition (polar residues).

It is found in the golgi apparatus membrane. This is an uncharacterized protein from Schizosaccharomyces pombe (strain 972 / ATCC 24843) (Fission yeast).